A 953-amino-acid chain; its full sequence is Glycine dehydrogenase (decarboxylating) (953 aa).

Residue K705 is modified to N6-(pyridoxal phosphate)lysine.

Belongs to the GcvP family. The glycine cleavage system is composed of four proteins: P, T, L and H. Pyridoxal 5'-phosphate is required as a cofactor.

The catalysed reaction is N(6)-[(R)-lipoyl]-L-lysyl-[glycine-cleavage complex H protein] + glycine + H(+) = N(6)-[(R)-S(8)-aminomethyldihydrolipoyl]-L-lysyl-[glycine-cleavage complex H protein] + CO2. Functionally, the glycine cleavage system catalyzes the degradation of glycine. The P protein binds the alpha-amino group of glycine through its pyridoxal phosphate cofactor; CO(2) is released and the remaining methylamine moiety is then transferred to the lipoamide cofactor of the H protein. This is Glycine dehydrogenase (decarboxylating) from Sodalis glossinidius (strain morsitans).